The primary structure comprises 437 residues: GTPase Der (437 aa).

2 EngA-type G domains span residues 4-167 (PVVA…PDEA) and 176-352 (IRFS…DNHR). Residues 10-17 (GRPNVGKS), 57-61 (DTGGI), 119-122 (NKVD), 182-189 (GRPNVGKS), 230-234 (DTAGM), and 295-298 (NKWD) contribute to the GTP site. The KH-like domain maps to 353–437 (KRISSSTLND…PIKLIVRARK (85 aa)).

The protein belongs to the TRAFAC class TrmE-Era-EngA-EngB-Septin-like GTPase superfamily. EngA (Der) GTPase family. Associates with the 50S ribosomal subunit.

Functionally, GTPase that plays an essential role in the late steps of ribosome biogenesis. The chain is GTPase Der from Leuconostoc citreum (strain KM20).